The sequence spans 180 residues: Large ribosomal subunit protein uL5 (180 aa).

The protein belongs to the universal ribosomal protein uL5 family. In terms of assembly, part of the 50S ribosomal subunit; part of the 5S rRNA/L5/L18/L25 subcomplex. Contacts the 5S rRNA and the P site tRNA. Forms a bridge to the 30S subunit in the 70S ribosome.

This is one of the proteins that bind and probably mediate the attachment of the 5S RNA into the large ribosomal subunit, where it forms part of the central protuberance. In the 70S ribosome it contacts protein S13 of the 30S subunit (bridge B1b), connecting the 2 subunits; this bridge is implicated in subunit movement. Contacts the P site tRNA; the 5S rRNA and some of its associated proteins might help stabilize positioning of ribosome-bound tRNAs. This chain is Large ribosomal subunit protein uL5, found in Lacticaseibacillus casei (strain BL23) (Lactobacillus casei).